The sequence spans 927 residues: DNA mismatch repair protein MutS (927 aa).

646-653 (GPNMAGKS) contributes to the ATP binding site. Residues 904 to 927 (SAQPGSAEQGESPDKHDEGKNSRG) form a disordered region. Basic and acidic residues predominate over residues 915–927 (SPDKHDEGKNSRG).

This sequence belongs to the DNA mismatch repair MutS family.

Functionally, this protein is involved in the repair of mismatches in DNA. It is possible that it carries out the mismatch recognition step. This protein has a weak ATPase activity. The protein is DNA mismatch repair protein MutS of Desulfovibrio desulfuricans (strain ATCC 27774 / DSM 6949 / MB).